Here is a 372-residue protein sequence, read N- to C-terminus: N-methyl-L-tryptophan oxidase (372 aa).

4 to 34 (DLIIIGSGSVGAAAGYYATRAGLNVLMTDAH) serves as a coordination point for FAD. C308 is subject to S-8alpha-FAD cysteine.

This sequence belongs to the MSOX/MTOX family. MTOX subfamily. As to quaternary structure, monomer. Requires FAD as cofactor.

The enzyme catalyses N(alpha)-methyl-L-tryptophan + O2 + H2O = L-tryptophan + formaldehyde + H2O2. Functionally, catalyzes the oxidative demethylation of N-methyl-L-tryptophan. The chain is N-methyl-L-tryptophan oxidase from Escherichia coli O139:H28 (strain E24377A / ETEC).